The primary structure comprises 709 residues: MFEKPVVKTFQYGNHTVTLETGVMARQATAAVMATMDDTAVFVSVVGKKEAVVGQDFFPLTVNYQERTYAAGKIPGGFFKREGRPSEGETLIARLIDRPIRPLFPDGFTNEVQVIATVVSVNPDVQPDIISMIGTSAALAISGLPFNGPIGAARVGHIDGQLVLNPSEKELKQSRLDLVVAGTDNAVLMVESEAQILTEEEMLAAVVFGHDQQQAVIKAINEFAAEVATPAWEWVAPAENTELKAKVAALAETRLVEAYQITEKMARYDRIHEISAEVTAALLAENEALDTKEIHTIFHDLEKTVVRRSIIAGNPRIDGREKDMVRALDVRTGVLPRTHGSALFTRGETQALVTATLGTQRDAQIIDELTGEKKDHFLLHYNFPPYCVGETGFVGSPKRREIGHGRLAKRGIAAVMPSPEEFPYTVRVVSEITESNGSSSMASVCGSSLALMDAGVPIKASVAGIAMGLVKEENDFVVLSDILGDEDHLGDMDFKVAGTATGVTALQMDIKIEGITKEIMQIALNQAKGARLHILSVMDQAISAARSDISEFAPRIHTMKISVEKIKDVIGKGGAVIRQLTEETGTTIEIEDDGTIKIAATDGDQAKEAIRRIQEITAEVEVGVIYTGKVARLADFGAFVTILPGKDGLVHISQIADKRVEKVSDYLTEGQEVQVKVLEIDRQGRVRLSMKEAVETSDAAAAEVAPQAE.

2 residues coordinate Mg(2+): D487 and D493. One can recognise a KH domain in the interval 554–613; sequence PRIHTMKISVEKIKDVIGKGGAVIRQLTEETGTTIEIEDDGTIKIAATDGDQAKEAIRRI. The S1 motif domain occupies 623 to 691; it reads GVIYTGKVAR…RQGRVRLSMK (69 aa).

It belongs to the polyribonucleotide nucleotidyltransferase family. In terms of assembly, component of the RNA degradosome, which is a multiprotein complex involved in RNA processing and mRNA degradation. Mg(2+) is required as a cofactor.

It localises to the cytoplasm. It catalyses the reaction RNA(n+1) + phosphate = RNA(n) + a ribonucleoside 5'-diphosphate. Functionally, involved in mRNA degradation. Catalyzes the phosphorolysis of single-stranded polyribonucleotides processively in the 3'- to 5'-direction. This Vibrio cholerae serotype O1 (strain ATCC 39315 / El Tor Inaba N16961) protein is Polyribonucleotide nucleotidyltransferase.